Here is a 113-residue protein sequence, read N- to C-terminus: UPF0060 membrane protein CV_3485 (113 aa).

The next 4 helical transmembrane spans lie at Gly-12 to Leu-32, Ser-37 to Leu-57, Ala-67 to Val-87, and Arg-91 to Pro-111.

It belongs to the UPF0060 family.

It is found in the cell inner membrane. The chain is UPF0060 membrane protein CV_3485 from Chromobacterium violaceum (strain ATCC 12472 / DSM 30191 / JCM 1249 / CCUG 213 / NBRC 12614 / NCIMB 9131 / NCTC 9757 / MK).